The primary structure comprises 428 residues: ATP-dependent RNA helicase RhlB (428 aa).

The Q motif motif lies at 9-37; it reads KKFSDFALHPKVIEALDNKGFSNCTPIQA. A Helicase ATP-binding domain is found at 40–219; sequence LPFTVEGRDV…FEQMNHAEYI (180 aa). 53–60 provides a ligand contact to ATP; that stretch reads AQTGTGKT. The DEAD box motif lies at 165–168; the sequence is DEAD. The Helicase C-terminal domain maps to 245–390; the sequence is RLLQTLLEEE…VSKYNSQALL (146 aa). The segment at 392-428 is disordered; sequence DLPAPKRRYRSRSGNHQRRNNLSHRNNTPRNNRKRSG. Positions 396–413 are enriched in basic residues; sequence PKRRYRSRSGNHQRRNNL.

This sequence belongs to the DEAD box helicase family. RhlB subfamily. As to quaternary structure, component of the RNA degradosome, which is a multiprotein complex involved in RNA processing and mRNA degradation.

The protein resides in the cytoplasm. It carries out the reaction ATP + H2O = ADP + phosphate + H(+). Its function is as follows. DEAD-box RNA helicase involved in RNA degradation. Has RNA-dependent ATPase activity and unwinds double-stranded RNA. In Photorhabdus laumondii subsp. laumondii (strain DSM 15139 / CIP 105565 / TT01) (Photorhabdus luminescens subsp. laumondii), this protein is ATP-dependent RNA helicase RhlB.